A 307-amino-acid polypeptide reads, in one-letter code: Aspartate carbamoyltransferase catalytic subunit (307 aa).

Residues R56 and T57 each contribute to the carbamoyl phosphate site. K84 provides a ligand contact to L-aspartate. Positions 106, 136, and 139 each coordinate carbamoyl phosphate. L-aspartate-binding residues include R169 and R221. Carbamoyl phosphate-binding residues include A262 and P263.

The protein belongs to the aspartate/ornithine carbamoyltransferase superfamily. ATCase family. In terms of assembly, heterododecamer (2C3:3R2) of six catalytic PyrB chains organized as two trimers (C3), and six regulatory PyrI chains organized as three dimers (R2).

The catalysed reaction is carbamoyl phosphate + L-aspartate = N-carbamoyl-L-aspartate + phosphate + H(+). Its pathway is pyrimidine metabolism; UMP biosynthesis via de novo pathway; (S)-dihydroorotate from bicarbonate: step 2/3. Its function is as follows. Catalyzes the condensation of carbamoyl phosphate and aspartate to form carbamoyl aspartate and inorganic phosphate, the committed step in the de novo pyrimidine nucleotide biosynthesis pathway. This Streptococcus pneumoniae (strain P1031) protein is Aspartate carbamoyltransferase catalytic subunit.